Here is a 36-residue protein sequence, read N- to C-terminus: Potassium channel toxin alpha-KTx 16.5 (36 aa).

3 disulfides stabilise this stretch: cysteine 7/cysteine 28, cysteine 13/cysteine 33, and cysteine 17/cysteine 35. The segment at 26–33 (GKCQNKQC) is interaction with Ca(2+)-activated K(+) channels.

Belongs to the short scorpion toxin superfamily. Potassium channel inhibitor family. Alpha-KTx 16 subfamily. In terms of tissue distribution, expressed by the venom gland.

The protein localises to the secreted. In terms of biological role, augments responses to direct muscle stimulation probably by blocking calcium-activated potassium channels. The protein is Potassium channel toxin alpha-KTx 16.5 of Leiurus hebraeus (Hebrew deathstalker scorpion).